Reading from the N-terminus, the 587-residue chain is Sulfite reductase [NADPH] hemoprotein beta-component (587 aa).

Polar residues predominate over residues 1 to 13; the sequence is MQSTDNDLSQSPP. Residues 1–20 are disordered; the sequence is MQSTDNDLSQSPPKLSADEQ. The [4Fe-4S] cluster site is built by Cys-439, Cys-445, Cys-484, and Cys-488. Cys-488 lines the siroheme pocket.

This sequence belongs to the nitrite and sulfite reductase 4Fe-4S domain family. As to quaternary structure, alpha(8)-beta(8). The alpha component is a flavoprotein, the beta component is a hemoprotein. It depends on siroheme as a cofactor. Requires [4Fe-4S] cluster as cofactor.

The catalysed reaction is hydrogen sulfide + 3 NADP(+) + 3 H2O = sulfite + 3 NADPH + 4 H(+). Its pathway is sulfur metabolism; hydrogen sulfide biosynthesis; hydrogen sulfide from sulfite (NADPH route): step 1/1. In terms of biological role, component of the sulfite reductase complex that catalyzes the 6-electron reduction of sulfite to sulfide. This is one of several activities required for the biosynthesis of L-cysteine from sulfate. The polypeptide is Sulfite reductase [NADPH] hemoprotein beta-component (Bordetella petrii (strain ATCC BAA-461 / DSM 12804 / CCUG 43448)).